A 159-amino-acid polypeptide reads, in one-letter code: Immunoglobulin J chain (159 aa).

A signal peptide spans Met1 to Ala22. Gln23 carries the post-translational modification Pyrrolidone carboxylic acid. 3 cysteine pairs are disulfide-bonded: Cys35–Cys123, Cys94–Cys114, and Cys131–Cys156. An N-linked (GlcNAc...) (complex) asparagine glycan is attached at Asn71.

As to quaternary structure, part of the secretory IgA (sIgA) complex that consists of two, four or five IgA monomers, and two additional non-Ig polypeptides, namely the JCHAIN and the secretory component (the proteolytic product of PIGR). Part of the secretory IgM (sIgM) complex that consists of five IgM monomers, and two additional non-Ig polypeptides, namely the JCHAIN and the secretory component (the proteolytic product of PIGR). JCHAIN-containing IgM interacts (via CH4 domain) with FCRM (via Ig-like domain).

The protein resides in the secreted. Functionally, serves to link two monomer units of either IgM or IgA. In the case of IgM, the J chain-joined dimer is a nucleating unit for the IgM pentamer, and in the case of IgA it induces dimers and/or larger polymers. It also helps to bind these immunoglobulins to secretory component. This chain is Immunoglobulin J chain, found in Homo sapiens (Human).